The chain runs to 206 residues: LexA repressor (206 aa).

The H-T-H motif DNA-binding region spans 28–48; it reads VREIGEAVGLASSSTVHGHLA. Catalysis depends on for autocatalytic cleavage activity residues S128 and K166.

Belongs to the peptidase S24 family. In terms of assembly, homodimer.

It carries out the reaction Hydrolysis of Ala-|-Gly bond in repressor LexA.. Functionally, represses a number of genes involved in the response to DNA damage (SOS response), including recA and lexA. In the presence of single-stranded DNA, RecA interacts with LexA causing an autocatalytic cleavage which disrupts the DNA-binding part of LexA, leading to derepression of the SOS regulon and eventually DNA repair. This is LexA repressor from Bacillus velezensis (strain DSM 23117 / BGSC 10A6 / LMG 26770 / FZB42) (Bacillus amyloliquefaciens subsp. plantarum).